We begin with the raw amino-acid sequence, 238 residues long: UPF0328 protein ECU07_0010 (238 aa).

2 disordered regions span residues 1–154 (MAAP…NTQR) and 211–238 (GRLH…LATL). Positions 106–128 (HTEGCHTHEANPEPNTKHTETES) are enriched in basic and acidic residues. A compositionally biased stretch (polar residues) spans 129–152 (PKPQTSTQHHTPITIPSSLLSQNT).

The protein belongs to the UPF0328 family.

In Encephalitozoon cuniculi (strain GB-M1) (Microsporidian parasite), this protein is UPF0328 protein ECU07_0010.